Reading from the N-terminus, the 244-residue chain is ATP synthase subunit 4, mitochondrial (244 aa).

Residues 1–36 (MASRLAKSAICAARVRPVLSSRTIPAAATTLTSTRS) constitute a mitochondrion transit peptide.

This sequence belongs to the eukaryotic ATPase B chain family. As to quaternary structure, F-type ATPases have 2 components, CF(1) - the catalytic core - and CF(0) - the membrane proton channel. In yeast, the dimeric form of ATP synthase consists of 17 polypeptides: alpha, beta, gamma, delta, epsilon, 4 (B), 5 (OSCP), 6 (A), 8, 9 (C), d, E (Tim11), f, g, h, i/j and k.

The protein resides in the mitochondrion. It localises to the mitochondrion inner membrane. In terms of biological role, mitochondrial membrane ATP synthase (F(1)F(0) ATP synthase or Complex V) produces ATP from ADP in the presence of a proton gradient across the membrane which is generated by electron transport complexes of the respiratory chain. F-type ATPases consist of two structural domains, F(1) - containing the extramembraneous catalytic core, and F(0) - containing the membrane proton channel, linked together by a central stalk and a peripheral stalk. During catalysis, ATP synthesis in the catalytic domain of F(1) is coupled via a rotary mechanism of the central stalk subunits to proton translocation. Part of the complex F(0) domain and the peripheric stalk, which acts as a stator to hold the catalytic alpha(3)beta(3) subcomplex and subunit a/ATP6 static relative to the rotary elements. This chain is ATP synthase subunit 4, mitochondrial (ATP4), found in Paracoccidioides brasiliensis.